The primary structure comprises 196 residues: Imidazole glycerol phosphate synthase subunit HisH (196 aa).

Positions 2–196 (NVVILDTGCA…AQLLKNFLEM (195 aa)) constitute a Glutamine amidotransferase type-1 domain. C77 functions as the Nucleophile in the catalytic mechanism. Residues H178 and E180 contribute to the active site.

In terms of assembly, heterodimer of HisH and HisF.

The protein localises to the cytoplasm. The enzyme catalyses 5-[(5-phospho-1-deoxy-D-ribulos-1-ylimino)methylamino]-1-(5-phospho-beta-D-ribosyl)imidazole-4-carboxamide + L-glutamine = D-erythro-1-(imidazol-4-yl)glycerol 3-phosphate + 5-amino-1-(5-phospho-beta-D-ribosyl)imidazole-4-carboxamide + L-glutamate + H(+). It catalyses the reaction L-glutamine + H2O = L-glutamate + NH4(+). Its pathway is amino-acid biosynthesis; L-histidine biosynthesis; L-histidine from 5-phospho-alpha-D-ribose 1-diphosphate: step 5/9. In terms of biological role, IGPS catalyzes the conversion of PRFAR and glutamine to IGP, AICAR and glutamate. The HisH subunit catalyzes the hydrolysis of glutamine to glutamate and ammonia as part of the synthesis of IGP and AICAR. The resulting ammonia molecule is channeled to the active site of HisF. The chain is Imidazole glycerol phosphate synthase subunit HisH from Salmonella choleraesuis (strain SC-B67).